Reading from the N-terminus, the 222-residue chain is 2-C-methyl-D-erythritol 4-phosphate cytidylyltransferase (222 aa).

It belongs to the IspD/TarI cytidylyltransferase family. IspD subfamily.

It carries out the reaction 2-C-methyl-D-erythritol 4-phosphate + CTP + H(+) = 4-CDP-2-C-methyl-D-erythritol + diphosphate. It functions in the pathway isoprenoid biosynthesis; isopentenyl diphosphate biosynthesis via DXP pathway; isopentenyl diphosphate from 1-deoxy-D-xylulose 5-phosphate: step 2/6. Its function is as follows. Catalyzes the formation of 4-diphosphocytidyl-2-C-methyl-D-erythritol from CTP and 2-C-methyl-D-erythritol 4-phosphate (MEP). This is 2-C-methyl-D-erythritol 4-phosphate cytidylyltransferase from Porphyromonas gingivalis (strain ATCC BAA-308 / W83).